A 369-amino-acid chain; its full sequence is Aminomethyltransferase (369 aa).

This sequence belongs to the GcvT family. In terms of assembly, the glycine cleavage system is composed of four proteins: P, T, L and H.

The enzyme catalyses N(6)-[(R)-S(8)-aminomethyldihydrolipoyl]-L-lysyl-[protein] + (6S)-5,6,7,8-tetrahydrofolate = N(6)-[(R)-dihydrolipoyl]-L-lysyl-[protein] + (6R)-5,10-methylene-5,6,7,8-tetrahydrofolate + NH4(+). Its function is as follows. The glycine cleavage system catalyzes the degradation of glycine. This chain is Aminomethyltransferase, found in Xanthomonas oryzae pv. oryzae (strain PXO99A).